The primary structure comprises 374 residues: Translocating chain-associated membrane protein 1 (374 aa).

At 1-32 (MAIRKKSNKNPPVLSHEFVLQNHADIVSCLAM) the chain is on the cytoplasmic side. A helical membrane pass occupies residues 33 to 53 (LFLLGLMFEITAKGAIIFVAL). The Lumenal portion of the chain corresponds to 54 to 81 (QYNVTRPATEEQAAESASLYYYGIKDLA). N-linked (GlcNAc...) asparagine glycosylation occurs at asparagine 56. A helical membrane pass occupies residues 82–102 (TVFFYMLVAIIVHAIIQEYVL). Residues 103 to 121 (DKINRRMHFSKTKHSKFNE) lie on the Cytoplasmic side of the membrane. The TLC domain maps to 117–326 (SKFNESGQLS…NFQLRRWREH (210 aa)). The chain crosses the membrane as a helical span at residues 122 to 142 (SGQLSAFYLFACVWGTFILVS). Topologically, residues 143-159 (ENYISDPTILWRAYPHN) are lumenal. Residues 160–180 (LMTFQMKFFYISQLAYWLHAF) form a helical membrane-spanning segment. Topologically, residues 181 to 192 (PELYFQKTKKED) are cytoplasmic. The helical transmembrane segment at 193–213 (IPRQLVYIGLYLFHIAGAYLL) threads the bilayer. Asparagine 214 is a topological domain (lumenal). The helical transmembrane segment at 215–235 (LNHLGLVLLVLHYFVEFLFHI) threads the bilayer. Over 236–251 (SRLFYFSDEKYQKGFS) the chain is Cytoplasmic. A helical transmembrane segment spans residues 252-272 (LWAVLFVLGRLLTLILSVLTV). Residues 273-297 (GFGLARAENQKLDFSTGNFNVLAVR) are Lumenal-facing. A helical membrane pass occupies residues 298–318 (IAVLASICITQAFMMWKFINF). Topologically, residues 319–374 (QLRRWREHSAFQAPPVKRKPAVTKGRSSRKGTENGVNGTVTSNGADSPRSRKEKSS) are cytoplasmic. The segment at 333 to 374 (PVKRKPAVTKGRSSRKGTENGVNGTVTSNGADSPRSRKEKSS) is disordered. A compositionally biased stretch (basic residues) spans 334–347 (VKRKPAVTKGRSSR). Positions 352–363 (NGVNGTVTSNGA) are enriched in polar residues. The residue at position 365 (serine 365) is a Phosphoserine.

This sequence belongs to the TRAM family. Interacts with SEC61B. May interact with Derlin-1/DERL1. Post-translationally, N-glycosylated.

Its subcellular location is the endoplasmic reticulum membrane. Involved in the translocation of nascent protein chains into or through the endoplasmic reticulum (ER) membrane by facilitating the proper chain positioning at the SEC61 channel. Regulates the exposure of nascent secretory protein chain to the cytosol during translocation into the ER. May affect the phospholipid bilayer in the vicinity of the lateral gate of the SEC61 channel, thereby facilitating ER protein transport. Intimately associates with transmembrane (TM) domain of nascent membrane proteins during the entire integration process into the ER membrane. Associates with the second TM domain of G-protein-coupled receptor opsin/OPSD nascent chain in the ER membrane, which may facilitate its integration into the membrane. Under conditions of ER stress, participates in the disposal of misfolded ER membrane proteins during the unfolded protein response (UPR), an integrated stress response (ISR) pathway, by selectively retrotranslocating misfolded ER-membrane proteins from the ER into the cytosol where they are ubiquitinated and degraded by the proteasome. This is Translocating chain-associated membrane protein 1 from Rattus norvegicus (Rat).